The primary structure comprises 206 residues: Protein GrpE (206 aa).

The protein belongs to the GrpE family. Homodimer.

It is found in the cytoplasm. Participates actively in the response to hyperosmotic and heat shock by preventing the aggregation of stress-denatured proteins, in association with DnaK and GrpE. It is the nucleotide exchange factor for DnaK and may function as a thermosensor. Unfolded proteins bind initially to DnaJ; upon interaction with the DnaJ-bound protein, DnaK hydrolyzes its bound ATP, resulting in the formation of a stable complex. GrpE releases ADP from DnaK; ATP binding to DnaK triggers the release of the substrate protein, thus completing the reaction cycle. Several rounds of ATP-dependent interactions between DnaJ, DnaK and GrpE are required for fully efficient folding. This chain is Protein GrpE, found in Shewanella baltica (strain OS223).